Here is a 389-residue protein sequence, read N- to C-terminus: Basigin (389 aa).

Positions 1–21 (MAAALLLALAFTLLSGQGACA) are cleaved as a signal peptide. The Extracellular portion of the chain corresponds to 22-325 (AAGFLKAPLS…ETISLRVRSR (304 aa)). The region spanning 37-120 (GGSVVLHCEA…SSDPDRNHLT (84 aa)) is the Ig-like domain. 3 disulfides stabilise this stretch: C44-C108, C157-C203, and C242-C305. The Ig-like C2-type domain maps to 138–219 (EPGTIQTSVQ…VGRSEINVEG (82 aa)). N-linked (GlcNAc...) asparagine glycans are attached at residues N160, N270, and N306. One can recognise an Ig-like V-type domain in the interval 221 to 319 (PRIKVGKKSE…AQGTTRETIS (99 aa)). A helical membrane pass occupies residues 326–349 (MAALWPFLGIVAEVLVLVTIIFIY). Topologically, residues 350–389 (EKRRKPDQTLDEDDPGAAPLKGSGTHMNDKDKNVRQRNAT) are cytoplasmic. A disordered region spans residues 356 to 389 (DQTLDEDDPGAAPLKGSGTHMNDKDKNVRQRNAT). A Phosphothreonine modification is found at T358. At S372 the chain carries Phosphoserine.

In terms of assembly, interacts with NXNL1. Interacts with SLC2A1 and SLC16A1/GLUT1. Interacts with XKR8; promoting its localization at the cell membrane. As to quaternary structure, interacts with ATP1B2, MAG and L1CAM. Interacts with SLC16A7. Interacts with VEGFA, KDR/VEGFR2, PPIA/CYPA, SLC1A3, SLC16A11 and SLC16A12. Interacts with PPIL2; regulates BSG transport to the cell membrane. Interacts with SLC16A1; interaction mediates SLC16A1 targeting to the plasma membrane. Interacts with SLC16A3; interaction mediates SLC16A3 targeting to the plasma membrane. Interacts with SLC16A6; this interaction mediates targeting to the plasma membrane. Post-translationally, N-glycosylated. N-glycosylated. During spermatogenesis, probably deglycosylated during epididymal transit. In terms of tissue distribution, retina-specific. Expressed in both rods and cones (at protein level). As to expression, testis and caput, corpus and cauda epididymides (at protein level). Expressed in the brain, lung, liver, kidney, heart, spleen, uterus, retina and skeletal muscle.

Its subcellular location is the cell membrane. It localises to the photoreceptor inner segment. It is found in the cell projection. The protein resides in the cilium. The protein localises to the photoreceptor outer segment. Its subcellular location is the endoplasmic reticulum membrane. It localises to the basolateral cell membrane. Its function is as follows. Essential for normal retinal maturation and development. Acts as a retinal cell surface receptor for NXNL1 and plays an important role in NXNL1-mediated survival of retinal cone photoreceptors. In association with glucose transporter SLC16A1/GLUT1 and NXNL1, promotes retinal cone survival by enhancing aerobic glycolysis and accelerating the entry of glucose into photoreceptors. Signaling receptor for cyclophilins, essential for PPIA/CYPA and PPIB/CYPB-dependent signaling related to chemotaxis and adhesion of immune cells. Plays an important role in targeting the monocarboxylate transporters SLC16A1, SLC16A3 and SLC16A8 to the plasma membrane. Acts as a coreceptor for vascular endothelial growth factor receptor 2 (KDR/VEGFR2) in endothelial cells enhancing its VEGFA-mediated activation and downstream signaling. Promotes angiogenesis through EPAS1/HIF2A-mediated up-regulation of VEGFA and KDR/VEGFR2 in endothelial cells. Plays an important role in spermatogenesis; mediates interactions between germ cells and Sertoli cell and is essential for the development/differentiation of germ cells to round spermatids. The chain is Basigin (Bsg) from Mus musculus (Mouse).